The primary structure comprises 465 residues: NADH-quinone oxidoreductase subunit N (465 aa).

Helical transmembrane passes span 6 to 26 (ILPE…GIVF), 30 to 50 (TINL…ILSA), 66 to 86 (LYIR…LLLL), 98 to 118 (SILI…NNLI), 156 to 176 (ALSS…TGLV), 194 to 214 (IVFG…IAPF), 226 to 246 (PTIV…TFLI), 261 to 281 (FQPV…FGAL), 289 to 309 (LLAY…SIFT), 317 to 337 (LIYL…FIQI), 363 to 383 (ILLF…KLFI), 391 to 411 (GFIG…YYYL), and 432 to 452 (SLFI…MCVE).

The protein belongs to the complex I subunit 2 family. In terms of assembly, NDH-1 is composed of 14 different subunits. Subunits NuoA, H, J, K, L, M, N constitute the membrane sector of the complex.

The protein resides in the cell membrane. It catalyses the reaction a quinone + NADH + 5 H(+)(in) = a quinol + NAD(+) + 4 H(+)(out). NDH-1 shuttles electrons from NADH, via FMN and iron-sulfur (Fe-S) centers, to quinones in the respiratory chain. The immediate electron acceptor for the enzyme in this species is believed to be ubiquinone. Couples the redox reaction to proton translocation (for every two electrons transferred, four hydrogen ions are translocated across the cytoplasmic membrane), and thus conserves the redox energy in a proton gradient. The protein is NADH-quinone oxidoreductase subunit N of Wolbachia sp. subsp. Brugia malayi (strain TRS).